Reading from the N-terminus, the 622-residue chain is Polyamine transporter 3 (622 aa).

Residues 1–47 are compositionally biased toward polar residues; the sequence is MNRQESINSFNSDETSSLSDVESQQPQQYIPSESGSKSNMAPNQLKL. The segment at 1–76 is disordered; sequence MNRQESINSF…VPDVNAPQSS (76 aa). The Cytoplasmic segment spans residues 1 to 182; the sequence is MNRQESINSF…WPAWIRWSYT (182 aa). Residue Ser55 is modified to Phosphoserine. Thr98 bears the Phosphothreonine mark. Ser101 and Ser132 each carry phosphoserine. The segment at 105-152 is disordered; that stretch reads TSTAISRTRTRQIDGASSPSSNEDALESDNNEKGKEGDSSGANDEAPD. A helical membrane pass occupies residues 183-203; the sequence is VLLSILVICVAYGSACISGGL. Topologically, residues 204–215 are extracellular; that stretch reads GTVEKKYHVGME. Residues 216–236 form a helical membrane-spanning segment; that stretch reads AAILSVSLMVIGFSLGPLIWS. Residues 237–245 lie on the Cytoplasmic side of the membrane; sequence PVSDLYGRR. A helical transmembrane segment spans residues 246–266; it reads VAYFVSMGLYVIFNIPCALAP. Over 267–275 the chain is Extracellular; that stretch reads NLGSLLACR. A helical transmembrane segment spans residues 276–296; the sequence is FLCGVWSSSGLCLVGGSIADM. The Cytoplasmic segment spans residues 297–305; sequence FPSETRGKA. A helical transmembrane segment spans residues 306–326; that stretch reads IAFFAFAPYVGPVVGPLVNGF. At 327–335 the chain is on the extracellular side; it reads ISVSTGRMD. A helical transmembrane segment spans residues 336–356; that stretch reads LIFWVNMAFAGVMWIISSAIP. The Cytoplasmic segment spans residues 357 to 416; it reads ETYAPVILKRKAARLRKETGNPKIMTEQEAQGVSMGEMMRACLLRPLYFSVTEPVLVATC. Residues 417–437 traverse the membrane as a helical segment; that stretch reads FYVCLIYSLLYAFFFAFPVIF. Residues 438-446 are Extracellular-facing; it reads GELYGYKDN. The chain crosses the membrane as a helical span at residues 447-467; that stretch reads LVGLMFIPIVIGALWALATTF. Residues 468–487 lie on the Cytoplasmic side of the membrane; it reads YCENKYLQIVKQRKPTPEDR. Residues 488–508 form a helical membrane-spanning segment; sequence LLGAKIGAPFAAIALWILGAT. Residues 509 to 512 lie on the Extracellular side of the membrane; that stretch reads AYKH. The chain crosses the membrane as a helical span at residues 513-533; the sequence is IIWVGPASAGLAFGFGMVLIY. Over 534 to 550 the chain is Cytoplasmic; the sequence is YSLNNYIIDCYVQYASS. The helical transmembrane segment at 551 to 571 threads the bilayer; it reads ALATKVFLRSAGGAAFPLFTI. The Extracellular portion of the chain corresponds to 572 to 583; that stretch reads QMYHKLNLHWGS. Residues 584 to 604 traverse the membrane as a helical segment; it reads WLLAFISTAMIALPFAFSYWG. Residues 605–622 are Cytoplasmic-facing; the sequence is KGLRHKLSKKDYSIDSIE.

This sequence belongs to the major facilitator superfamily. DHA1 family. Polyamines/proton antiporter (TC 2.A.1.2.16) subfamily.

Its subcellular location is the cell membrane. Functionally, cell membrane polyamine/proton antiporter, involved in the detoxification of excess polyamines in the cytoplasm. Recognizes spermine, but not spermidine. This chain is Polyamine transporter 3 (TPO3), found in Saccharomyces cerevisiae (strain ATCC 204508 / S288c) (Baker's yeast).